A 235-amino-acid polypeptide reads, in one-letter code: Glycerol-3-phosphate acyltransferase (235 aa).

A run of 6 helical transmembrane segments spans residues 4 to 24, 56 to 76, 90 to 110, 126 to 146, 152 to 172, and 191 to 211; these read LIVILAVSYLIGSIPTSIIAG, AVTLLDIVKGAVAAISVVVFF, VALRLIAGLAAVFGHVFTVFA, FGIAPVSTLIVLAVFLLTIFV, VASIIAAIAFPLVILVRKYLF, and IHDSLDFHLLIFGMIVAFAII.

This sequence belongs to the PlsY family. Probably interacts with PlsX.

The protein resides in the cell inner membrane. The enzyme catalyses an acyl phosphate + sn-glycerol 3-phosphate = a 1-acyl-sn-glycero-3-phosphate + phosphate. It participates in lipid metabolism; phospholipid metabolism. In terms of biological role, catalyzes the transfer of an acyl group from acyl-phosphate (acyl-PO(4)) to glycerol-3-phosphate (G3P) to form lysophosphatidic acid (LPA). This enzyme utilizes acyl-phosphate as fatty acyl donor, but not acyl-CoA or acyl-ACP. The polypeptide is Glycerol-3-phosphate acyltransferase (Prosthecochloris aestuarii (strain DSM 271 / SK 413)).